The sequence spans 244 residues: Phosphoadenosine 5'-phosphosulfate reductase (244 aa).

The Nucleophile; cysteine thiosulfonate intermediate role is filled by C239.

It belongs to the PAPS reductase family. CysH subfamily.

The protein localises to the cytoplasm. It carries out the reaction [thioredoxin]-disulfide + sulfite + adenosine 3',5'-bisphosphate + 2 H(+) = [thioredoxin]-dithiol + 3'-phosphoadenylyl sulfate. It participates in sulfur metabolism; hydrogen sulfide biosynthesis; sulfite from sulfate: step 3/3. Catalyzes the formation of sulfite from phosphoadenosine 5'-phosphosulfate (PAPS) using thioredoxin as an electron donor. The chain is Phosphoadenosine 5'-phosphosulfate reductase from Enterobacter sp. (strain 638).